We begin with the raw amino-acid sequence, 79 residues long: MKQTINIQDTFLNHLRKENIAVTIYLVNGFQLRGYIKAFDNFTIVIDSEGKQQLVYKHAISTFTPQRPVSLMSQENNQQ.

One can recognise a Sm domain in the interval 9-69 (DTFLNHLRKE…ISTFTPQRPV (61 aa)).

Belongs to the Hfq family. Homohexamer.

Its function is as follows. RNA chaperone that binds small regulatory RNA (sRNAs) and mRNAs to facilitate mRNA translational regulation in response to envelope stress, environmental stress and changes in metabolite concentrations. Also binds with high specificity to tRNAs. The protein is RNA-binding protein Hfq of Brevibacillus brevis (strain 47 / JCM 6285 / NBRC 100599).